We begin with the raw amino-acid sequence, 393 residues long: Probable acetyl-CoA acyltransferase (393 aa).

The active-site Acyl-thioester intermediate is the Cys-88. Catalysis depends on proton acceptor residues His-349 and Cys-378.

This sequence belongs to the thiolase-like superfamily. Thiolase family.

It is found in the cytoplasm. The enzyme catalyses 2 acetyl-CoA = acetoacetyl-CoA + CoA. In Staphylococcus aureus (strain NCTC 8325 / PS 47), this protein is Probable acetyl-CoA acyltransferase.